Consider the following 331-residue polypeptide: MSWLTPALVTIILTVVKAIVVLLAVVICGALLSWVERRLLGLWQDRYGPNRVGPFGAFQLGADMVKMFFKEDWTPPFADKMIFTLAPVIAMGALLVAFAIVPITPTWGVADLNIGILFFFAMAGLTVYAVLFAGWSSNNKFALLGSLRASAQTISYEVFLALSLMGIVAQVGSFNMRDIVQYQIDNVWFIIPQFFGFCTFIIAGVAVTHRHPFDQPEAEQELADGYHIEYAGMKWGMFFVGEYIGIVLVSALLATLFFGGWHGPFLDTLPWLSFFYFAAKTGFFIMLFILIRASLPRPRYDQVMAFSWKVCLPLTLINLLVTGALVLAAAQ.

The next 8 membrane-spanning stretches (helical) occupy residues 7 to 27, 81 to 101, 114 to 134, 154 to 174, 187 to 207, 238 to 258, 271 to 291, and 310 to 330; these read ALVTIILTVVKAIVVLLAVVI, MIFTLAPVIAMGALLVAFAIV, IGILFFFAMAGLTVYAVLFAG, ISYEVFLALSLMGIVAQVGSF, VWFIIPQFFGFCTFIIAGVAV, FFVGEYIGIVLVSALLATLFF, WLSFFYFAAKTGFFIMLFILI, and VCLPLTLINLLVTGALVLAAA.

Belongs to the complex I subunit 1 family. As to quaternary structure, NDH-1 is composed of 13 different subunits. Subunits NuoA, H, J, K, L, M, N constitute the membrane sector of the complex.

The protein resides in the cell inner membrane. The catalysed reaction is a quinone + NADH + 5 H(+)(in) = a quinol + NAD(+) + 4 H(+)(out). NDH-1 shuttles electrons from NADH, via FMN and iron-sulfur (Fe-S) centers, to quinones in the respiratory chain. The immediate electron acceptor for the enzyme in this species is believed to be ubiquinone. Couples the redox reaction to proton translocation (for every two electrons transferred, four hydrogen ions are translocated across the cytoplasmic membrane), and thus conserves the redox energy in a proton gradient. This subunit may bind ubiquinone. The polypeptide is NADH-quinone oxidoreductase subunit H (Pseudomonas aeruginosa (strain ATCC 15692 / DSM 22644 / CIP 104116 / JCM 14847 / LMG 12228 / 1C / PRS 101 / PAO1)).